The chain runs to 277 residues: 4-hydroxy-3-methylbut-2-enyl diphosphate reductase (277 aa).

[4Fe-4S] cluster is bound at residue Cys12. (2E)-4-hydroxy-3-methylbut-2-enyl diphosphate contacts are provided by His36 and His70. Dimethylallyl diphosphate-binding residues include His36 and His70. Isopentenyl diphosphate is bound by residues His36 and His70. Cys92 serves as a coordination point for [4Fe-4S] cluster. His120 is a (2E)-4-hydroxy-3-methylbut-2-enyl diphosphate binding site. Residue His120 coordinates dimethylallyl diphosphate. His120 provides a ligand contact to isopentenyl diphosphate. The Proton donor role is filled by Glu122. (2E)-4-hydroxy-3-methylbut-2-enyl diphosphate is bound at residue Thr158. Cys186 serves as a coordination point for [4Fe-4S] cluster. (2E)-4-hydroxy-3-methylbut-2-enyl diphosphate contacts are provided by Ser214, Asn216, and Ser258. Ser214, Asn216, and Ser258 together coordinate dimethylallyl diphosphate. Isopentenyl diphosphate is bound by residues Ser214, Asn216, and Ser258.

Belongs to the IspH family. Requires [4Fe-4S] cluster as cofactor.

The catalysed reaction is isopentenyl diphosphate + 2 oxidized [2Fe-2S]-[ferredoxin] + H2O = (2E)-4-hydroxy-3-methylbut-2-enyl diphosphate + 2 reduced [2Fe-2S]-[ferredoxin] + 2 H(+). The enzyme catalyses dimethylallyl diphosphate + 2 oxidized [2Fe-2S]-[ferredoxin] + H2O = (2E)-4-hydroxy-3-methylbut-2-enyl diphosphate + 2 reduced [2Fe-2S]-[ferredoxin] + 2 H(+). The protein operates within isoprenoid biosynthesis; dimethylallyl diphosphate biosynthesis; dimethylallyl diphosphate from (2E)-4-hydroxy-3-methylbutenyl diphosphate: step 1/1. Its pathway is isoprenoid biosynthesis; isopentenyl diphosphate biosynthesis via DXP pathway; isopentenyl diphosphate from 1-deoxy-D-xylulose 5-phosphate: step 6/6. Functionally, catalyzes the conversion of 1-hydroxy-2-methyl-2-(E)-butenyl 4-diphosphate (HMBPP) into a mixture of isopentenyl diphosphate (IPP) and dimethylallyl diphosphate (DMAPP). Acts in the terminal step of the DOXP/MEP pathway for isoprenoid precursor biosynthesis. This is 4-hydroxy-3-methylbut-2-enyl diphosphate reductase from Campylobacter jejuni subsp. doylei (strain ATCC BAA-1458 / RM4099 / 269.97).